Consider the following 1385-residue polypeptide: DNA-directed RNA polymerase subunit beta'' (1385 aa).

The Zn(2+) site is built by C224, C294, C301, and C304.

Belongs to the RNA polymerase beta' chain family. RpoC2 subfamily. As to quaternary structure, in plastids the minimal PEP RNA polymerase catalytic core is composed of four subunits: alpha, beta, beta', and beta''. When a (nuclear-encoded) sigma factor is associated with the core the holoenzyme is formed, which can initiate transcription. Requires Zn(2+) as cofactor.

Its subcellular location is the plastid. The protein resides in the chloroplast. The catalysed reaction is RNA(n) + a ribonucleoside 5'-triphosphate = RNA(n+1) + diphosphate. In terms of biological role, DNA-dependent RNA polymerase catalyzes the transcription of DNA into RNA using the four ribonucleoside triphosphates as substrates. The protein is DNA-directed RNA polymerase subunit beta'' of Illicium oligandrum (Star anise).